A 427-amino-acid polypeptide reads, in one-letter code: Dihydroorotase (427 aa).

The Zn(2+) site is built by H58 and H60. Residues 60–62 (HLR) and N92 each bind substrate. Residues D150, H177, and H230 each coordinate Zn(2+). Position 276 (N276) interacts with substrate. Position 303 (D303) interacts with Zn(2+). D303 is an active-site residue. Substrate contacts are provided by residues H307 and 321-322 (FG).

It belongs to the metallo-dependent hydrolases superfamily. DHOase family. Class I DHOase subfamily. The cofactor is Zn(2+).

The catalysed reaction is (S)-dihydroorotate + H2O = N-carbamoyl-L-aspartate + H(+). The protein operates within pyrimidine metabolism; UMP biosynthesis via de novo pathway; (S)-dihydroorotate from bicarbonate: step 3/3. Its function is as follows. Catalyzes the reversible cyclization of carbamoyl aspartate to dihydroorotate. This Macrococcus caseolyticus (strain JCSC5402) (Macrococcoides caseolyticum) protein is Dihydroorotase.